Here is a 333-residue protein sequence, read N- to C-terminus: Gramillins biosynthetic cluster protein FGSG_00039 (333 aa).

It functions in the pathway mycotoxin biosynthesis. In terms of biological role, part of the gene cluster that mediates the biosynthesis of gramillins A and B, bicyclic lipopeptides that induce cell death in maize leaves but not in wheat leaves. The nonribosomal peptide synthetase GRA1 incorporates respectively a glutamic adic (Glu), a leucine (Leu), a serine (Ser), a hydroxyglutamine (HOGln), a 2-amino decanoic acid, and 2 cysteins (CysB and CysA). The biosynthesis of 2-amino decanoic acid incorporated in gramillins could be initiated by a fatty acid synthase composed of the alpha and beta subunits FGSG_00036 and FGSG_11656. The cytochrome P450 monooxygenase FGSG_15680 could hydroxylate the fatty acid chain. Subsequent oxidation to the ketone by the oxidoreductase FGSG_00048 and transamination by aminotransferase FGSG_00049 could form 2-amino-decanoic acid. On the other hand, FGSG_15680 could also be responsible for the HO-modified glutamine at the gamma-position. Whether hydroxylation occurs on the fully assembled product or on the Gln residue prior to assembly into the gramillins requires further proof. The thioredoxin FGSG_00043 could also be required for the disulfide-bond formation between CysA and CysB. The specific involvement of the remaining proteins from the cluster is more difficult to discern, but could have broader regulatory (FGSG_00040 and FGSG_11657) or enzymatic functions (FGSG_00044 and FGSG_00045). The final C-domain of GRA1 does not possess the expected sequence of a termination CT domain, often implicated in macrocyclization and release of a cyclopeptidein fungal NRPs; and the thioesterase FGSG_00047 may act in concert with the terminal C-domain of GRA1 to catalyze the formation of the macrocyclic anhydride and release of the products. The chain is Gramillins biosynthetic cluster protein FGSG_00039 from Gibberella zeae (strain ATCC MYA-4620 / CBS 123657 / FGSC 9075 / NRRL 31084 / PH-1) (Wheat head blight fungus).